The chain runs to 698 residues: Polyphosphate kinase (698 aa).

Asparagine 63 contributes to the ATP binding site. Residues arginine 390 and arginine 420 each coordinate Mg(2+). Histidine 450 acts as the Phosphohistidine intermediate in catalysis. 3 residues coordinate ATP: tyrosine 483, arginine 579, and histidine 607.

It belongs to the polyphosphate kinase 1 (PPK1) family. Requires Mg(2+) as cofactor. Post-translationally, an intermediate of this reaction is the autophosphorylated ppk in which a phosphate is covalently linked to a histidine residue through a N-P bond.

It catalyses the reaction [phosphate](n) + ATP = [phosphate](n+1) + ADP. Catalyzes the reversible transfer of the terminal phosphate of ATP to form a long-chain polyphosphate (polyP). The sequence is that of Polyphosphate kinase from Xylella fastidiosa (strain Temecula1 / ATCC 700964).